The sequence spans 140 residues: Histone H2B (140 aa).

The segment covering 1–10 (MPPKAAEKKP) has biased composition (basic and acidic residues). The interval 1–48 (MPPKAAEKKPSTGGKAPAGKAPAEKKEAGKKTAAAASGDKKKRGKTRK) is disordered. N6-acetyllysine; alternate is present on residues K8 and K9. Glycyl lysine isopeptide (Lys-Gly) (interchain with G-Cter in SUMO); alternate cross-links involve residues K8 and K9. A compositionally biased stretch (low complexity) spans 11 to 21 (STGGKAPAGKA). K15 carries the post-translational modification N6-acetyllysine. K25 carries the post-translational modification N6-acetyllysine; alternate. A Glycyl lysine isopeptide (Lys-Gly) (interchain with G-Cter in SUMO); alternate cross-link involves residue K25. K26 participates in a covalent cross-link: Glycyl lysine isopeptide (Lys-Gly) (interchain with G-Cter in SUMO). K134 participates in a covalent cross-link: Glycyl lysine isopeptide (Lys-Gly) (interchain with G-Cter in ubiquitin).

Belongs to the histone H2B family. As to quaternary structure, the nucleosome is a histone octamer containing two molecules each of H2A, H2B, H3 and H4 assembled in one H3-H4 heterotetramer and two H2A-H2B heterodimers. The octamer wraps approximately 147 bp of DNA. In terms of processing, monoubiquitinated by the ubc2-bre1 complex to form H2BK123ub1. H2BK123ub1 gives a specific tag for epigenetic transcriptional activation and is also prerequisite for H3K4me and H3K79me formation. H2BK123ub1 also modulates the formation of double-strand breaks during meiosis and is a prerequisite for DNA-damage checkpoint activation. Acetylated by gcn5 to form H2BK11ac and H2BK16ac. H2BK16ac can also be formed by esa1. Acetylation of N-terminal lysines and particularly formation of H2BK11acK16ac has a positive effect on transcription. Post-translationally, sumoylation to form H2BK6su or H2BK7su, and probably also H2BK16su or H2BK17su, occurs preferentially near the telomeres and represses gene transcription.

The protein resides in the nucleus. It localises to the chromosome. Its function is as follows. Core component of nucleosome. Nucleosomes wrap and compact DNA into chromatin, limiting DNA accessibility to the cellular machineries which require DNA as a template. Histones thereby play a central role in transcription regulation, DNA repair, DNA replication and chromosomal stability. DNA accessibility is regulated via a complex set of post-translational modifications of histones, also called histone code, and nucleosome remodeling. This Aspergillus clavatus (strain ATCC 1007 / CBS 513.65 / DSM 816 / NCTC 3887 / NRRL 1 / QM 1276 / 107) protein is Histone H2B (htb1).